We begin with the raw amino-acid sequence, 169 residues long: Crossover junction endodeoxyribonuclease RuvC (169 aa).

Active-site residues include Asp-11, Glu-71, and Asp-143. Mg(2+) is bound by residues Asp-11, Glu-71, and Asp-143.

Belongs to the RuvC family. Homodimer which binds Holliday junction (HJ) DNA. The HJ becomes 2-fold symmetrical on binding to RuvC with unstacked arms; it has a different conformation from HJ DNA in complex with RuvA. In the full resolvosome a probable DNA-RuvA(4)-RuvB(12)-RuvC(2) complex forms which resolves the HJ. The cofactor is Mg(2+).

The protein localises to the cytoplasm. The enzyme catalyses Endonucleolytic cleavage at a junction such as a reciprocal single-stranded crossover between two homologous DNA duplexes (Holliday junction).. In terms of biological role, the RuvA-RuvB-RuvC complex processes Holliday junction (HJ) DNA during genetic recombination and DNA repair. Endonuclease that resolves HJ intermediates. Cleaves cruciform DNA by making single-stranded nicks across the HJ at symmetrical positions within the homologous arms, yielding a 5'-phosphate and a 3'-hydroxyl group; requires a central core of homology in the junction. The consensus cleavage sequence is 5'-(A/T)TT(C/G)-3'. Cleavage occurs on the 3'-side of the TT dinucleotide at the point of strand exchange. HJ branch migration catalyzed by RuvA-RuvB allows RuvC to scan DNA until it finds its consensus sequence, where it cleaves and resolves the cruciform DNA. The chain is Crossover junction endodeoxyribonuclease RuvC from Rhizobium leguminosarum bv. trifolii (strain WSM2304).